The chain runs to 209 residues: MKKSRKKENMDSKERNQKEAERSEARNSESPAEKAGETKVSPENEPSSPEAEKNPEEACREENEILKDQLFRLAADFDNFRKRTARQMEENRKSVLEQVLLDFVEVTDNFDRAIKSARTAEDMGPIVSGIEQLSKQFFSILEKYGLERVKCEKAGEFDPHRHEAIHHIETSEVPDNTIVEIYKEGYALNEKVVRPALVSVARSPEEAEK.

Positions 1 to 63 (MKKSRKKENM…NPEEACREEN (63 aa)) are disordered. 2 stretches are compositionally biased toward basic and acidic residues: residues 7-42 (KENM…KVSP) and 50-63 (EAEK…REEN).

Belongs to the GrpE family. As to quaternary structure, homodimer.

It localises to the cytoplasm. Participates actively in the response to hyperosmotic and heat shock by preventing the aggregation of stress-denatured proteins, in association with DnaK and GrpE. It is the nucleotide exchange factor for DnaK and may function as a thermosensor. Unfolded proteins bind initially to DnaJ; upon interaction with the DnaJ-bound protein, DnaK hydrolyzes its bound ATP, resulting in the formation of a stable complex. GrpE releases ADP from DnaK; ATP binding to DnaK triggers the release of the substrate protein, thus completing the reaction cycle. Several rounds of ATP-dependent interactions between DnaJ, DnaK and GrpE are required for fully efficient folding. This chain is Protein GrpE, found in Methanosarcina mazei (strain ATCC BAA-159 / DSM 3647 / Goe1 / Go1 / JCM 11833 / OCM 88) (Methanosarcina frisia).